The chain runs to 287 residues: uncharacterized protein (287 aa).

The signal sequence occupies residues 1 to 31 (MLGSMALKLRKWIWASIPSLALILSSCSALV).

The protein belongs to the MG439/MG440 family.

This is an uncharacterized protein from Mycoplasma pneumoniae (strain ATCC 29342 / M129 / Subtype 1) (Mycoplasmoides pneumoniae).